We begin with the raw amino-acid sequence, 300 residues long: Tetrahydromethanopterin S-methyltransferase subunit E (300 aa).

Helical transmembrane passes span 62-82, 86-106, 135-155, 158-178, 226-246, and 261-281; these read PVSYGLYVAAAGATAWALMGM, PILAIIVGSAVAALVHGAYSV, PIVGHGFIAVFCMLFAAYLAV, LGNPFPLPLVALIFGITVGAI, YFCSKLGGPLTGLAFGLIIFL, and LITKAAIAIVVGLIVVITTLL.

Belongs to the MtrE family. In terms of assembly, the complex is composed of 8 subunits; MtrA, MtrB, MtrC, MtrD, MtrE, MtrF, MtrG and MtrH.

The protein localises to the cell membrane. The enzyme catalyses 5-methyl-5,6,7,8-tetrahydromethanopterin + coenzyme M + 2 Na(+)(in) = 5,6,7,8-tetrahydromethanopterin + methyl-coenzyme M + 2 Na(+)(out). The protein operates within one-carbon metabolism; methanogenesis from CO(2); methyl-coenzyme M from 5,10-methylene-5,6,7,8-tetrahydromethanopterin: step 2/2. Part of a complex that catalyzes the formation of methyl-coenzyme M and tetrahydromethanopterin from coenzyme M and methyl-tetrahydromethanopterin. This is an energy-conserving, sodium-ion translocating step. This Methanococcus aeolicus (strain ATCC BAA-1280 / DSM 17508 / OCM 812 / Nankai-3) protein is Tetrahydromethanopterin S-methyltransferase subunit E.